Consider the following 397-residue polypeptide: Acetate kinase (397 aa).

Mg(2+) is bound at residue Asn8. Lys15 serves as a coordination point for ATP. Arg89 is a substrate binding site. Asp146 acts as the Proton donor/acceptor in catalysis. ATP contacts are provided by residues 206 to 210 (HIGNG), 281 to 283 (DLR), and 328 to 332 (GVGEN). Mg(2+) is bound at residue Glu381.

It belongs to the acetokinase family. As to quaternary structure, homodimer. Mg(2+) serves as cofactor. Requires Mn(2+) as cofactor.

Its subcellular location is the cytoplasm. The catalysed reaction is acetate + ATP = acetyl phosphate + ADP. Its pathway is metabolic intermediate biosynthesis; acetyl-CoA biosynthesis; acetyl-CoA from acetate: step 1/2. Functionally, catalyzes the formation of acetyl phosphate from acetate and ATP. Can also catalyze the reverse reaction. The polypeptide is Acetate kinase (Oceanobacillus iheyensis (strain DSM 14371 / CIP 107618 / JCM 11309 / KCTC 3954 / HTE831)).